The chain runs to 113 residues: N-alpha-acetyltransferase 38-A, NatC auxiliary subunit (113 aa).

Residues 1–29 (MAAVLEENGCSRQSSPSAGDSDAEPGDTA) form a disordered region. Positions 28–106 (TARHKLESLL…IVSIQVELES (79 aa)) constitute a Sm domain.

It belongs to the snRNP Sm proteins family. In terms of assembly, component of the N-terminal acetyltransferase C (NatC) complex, which is composed of naa35, naa38 and naa30.

It is found in the cytoplasm. Auxillary component of the N-terminal acetyltransferase C (NatC) complex which catalyzes acetylation of N-terminal methionine residues. The sequence is that of N-alpha-acetyltransferase 38-A, NatC auxiliary subunit (naa38-a) from Xenopus laevis (African clawed frog).